The primary structure comprises 368 residues: Quinolinate synthase (368 aa).

Residues H46 and S63 each coordinate iminosuccinate. [4Fe-4S] cluster is bound at residue C110. Iminosuccinate-binding positions include 141–143 (YVN) and S162. C230 is a binding site for [4Fe-4S] cluster. Residues 256–258 (HPE) and T273 contribute to the iminosuccinate site. Residue C320 participates in [4Fe-4S] cluster binding.

The protein belongs to the quinolinate synthase family. Type 3 subfamily. [4Fe-4S] cluster serves as cofactor.

The protein localises to the cytoplasm. The enzyme catalyses iminosuccinate + dihydroxyacetone phosphate = quinolinate + phosphate + 2 H2O + H(+). It functions in the pathway cofactor biosynthesis; NAD(+) biosynthesis; quinolinate from iminoaspartate: step 1/1. Its function is as follows. Catalyzes the condensation of iminoaspartate with dihydroxyacetone phosphate to form quinolinate. The chain is Quinolinate synthase from Bacillus cereus (strain ZK / E33L).